The following is a 174-amino-acid chain: MATGRRKANRTKKEETNWQERVIQIRRVSKVVKGGKKLSFRAIVVVGNERGQVGVGVGKASDVIGAVKKGVADGKKHLIDIPITKSNSIPHPIDGVGGGAKVMMRPAAPGTGVIAGGAVRTVLELAGVRNVLAKQLGSNNPLNNARAAVNALSTLRTLAEVAEDRGIAIEKLYI.

The S5 DRBM domain maps to 18-81 (WQERVIQIRR…ADGKKHLIDI (64 aa)).

Belongs to the universal ribosomal protein uS5 family. As to quaternary structure, part of the 30S ribosomal subunit. Contacts proteins S4 and S8.

In terms of biological role, with S4 and S12 plays an important role in translational accuracy. Its function is as follows. Located at the back of the 30S subunit body where it stabilizes the conformation of the head with respect to the body. This chain is Small ribosomal subunit protein uS5, found in Trichormus variabilis (strain ATCC 29413 / PCC 7937) (Anabaena variabilis).